Here is a 901-residue protein sequence, read N- to C-terminus: Protein translocase subunit SecA (901 aa).

Residues Gln-85, 103–107 (GEGKT), and Asp-510 contribute to the ATP site. The tract at residues 848–901 (RINQNNLPVDENSQTTQNSETEDYSDRRIGRNEPCPCGSGKKYKHCHGSRVARQ) is disordered. A compositionally biased stretch (polar residues) spans 849 to 866 (INQNNLPVDENSQTTQNS). The Zn(2+) site is built by Cys-882, Cys-884, Cys-893, and His-894. A compositionally biased stretch (basic residues) spans 888-901 (KKYKHCHGSRVARQ).

Belongs to the SecA family. In terms of assembly, monomer and homodimer. Part of the essential Sec protein translocation apparatus which comprises SecA, SecYEG and auxiliary proteins SecDF-YajC and YidC. It depends on Zn(2+) as a cofactor.

The protein resides in the cell inner membrane. It is found in the cytoplasm. It carries out the reaction ATP + H2O + cellular proteinSide 1 = ADP + phosphate + cellular proteinSide 2.. Its function is as follows. Part of the Sec protein translocase complex. Interacts with the SecYEG preprotein conducting channel. Has a central role in coupling the hydrolysis of ATP to the transfer of proteins into and across the cell membrane, serving both as a receptor for the preprotein-SecB complex and as an ATP-driven molecular motor driving the stepwise translocation of polypeptide chains across the membrane. The protein is Protein translocase subunit SecA of Haemophilus influenzae (strain 86-028NP).